We begin with the raw amino-acid sequence, 200 residues long: UPF0637 protein LCK_01372 (200 aa).

It belongs to the UPF0637 family.

The sequence is that of UPF0637 protein LCK_01372 from Leuconostoc citreum (strain KM20).